The chain runs to 337 residues: uncharacterized protein (337 aa).

Residues 3 to 174 (IAVRGGHNFK…IGKLIAEAIN (172 aa)) enclose the MurNAc-LAA domain.

To C.perfringens pIP404 ORF10.

This is an uncharacterized protein from Clostridium perfringens (strain 13 / Type A).